The following is a 432-amino-acid chain: Glutamate-1-semialdehyde 2,1-aminomutase 2 (432 aa).

Position 268 is an N6-(pyridoxal phosphate)lysine (lysine 268).

Belongs to the class-III pyridoxal-phosphate-dependent aminotransferase family. HemL subfamily. As to quaternary structure, homodimer. Pyridoxal 5'-phosphate serves as cofactor.

It is found in the cytoplasm. The enzyme catalyses (S)-4-amino-5-oxopentanoate = 5-aminolevulinate. It participates in porphyrin-containing compound metabolism; protoporphyrin-IX biosynthesis; 5-aminolevulinate from L-glutamyl-tRNA(Glu): step 2/2. This chain is Glutamate-1-semialdehyde 2,1-aminomutase 2, found in Listeria innocua serovar 6a (strain ATCC BAA-680 / CLIP 11262).